Here is a 228-residue protein sequence, read N- to C-terminus: Demethylmenaquinone methyltransferase (228 aa).

S-adenosyl-L-methionine is bound by residues Thr62, Asp80, 100–101 (DA), and Ser117.

This sequence belongs to the class I-like SAM-binding methyltransferase superfamily. MenG/UbiE family.

It catalyses the reaction a 2-demethylmenaquinol + S-adenosyl-L-methionine = a menaquinol + S-adenosyl-L-homocysteine + H(+). The protein operates within quinol/quinone metabolism; menaquinone biosynthesis; menaquinol from 1,4-dihydroxy-2-naphthoate: step 2/2. Its function is as follows. Methyltransferase required for the conversion of demethylmenaquinol (DMKH2) to menaquinol (MKH2). The chain is Demethylmenaquinone methyltransferase from Mycolicibacterium gilvum (strain PYR-GCK) (Mycobacterium gilvum (strain PYR-GCK)).